Consider the following 1100-residue polypeptide: DNA repair protein RAD1 (1100 aa).

The segment at 1 to 47 (MSQLFYQGDSDDELQEELTRQTTQASQSSKIKNEDEPDDSNHLNEVE) is disordered. Positions 20–30 (RQTTQASQSSK) are enriched in polar residues. Basic and acidic residues predominate over residues 31 to 47 (IKNEDEPDDSNHLNEVE). Serine 613 carries the phosphoserine modification. The region spanning 821-901 (VVIVDTREFN…YPTLLIEFDE (81 aa)) is the ERCC4 domain. Positions 1063-1100 (EKEEQEQESTDENLESPGKTTDDNALHDHHNDVPEAPV) are disordered. The span at 1065–1076 (EEQEQESTDENL) shows a compositional bias: acidic residues. Phosphoserine is present on serine 1071. Threonine 1072 bears the Phosphothreonine mark. Residues 1082-1100 (TTDDNALHDHHNDVPEAPV) are compositionally biased toward basic and acidic residues.

Belongs to the XPF family. Component of the nucleotide excision repair factor 1 (NEF1) complex consisting of RAD1, RAD10 and RAD14. Interacts with SAW1.

The protein resides in the nucleus. Functionally, involved in nucleotide excision repair of DNA damaged with UV light, bulky adducts, or cross-linking agents. Along with RAD10 forms an endonuclease that specifically degrades single-stranded DNA. This Saccharomyces cerevisiae (strain ATCC 204508 / S288c) (Baker's yeast) protein is DNA repair protein RAD1 (RAD1).